The primary structure comprises 386 residues: Succinate--CoA ligase [ADP-forming] subunit beta (386 aa).

An ATP-grasp domain is found at 9–244 (KAVLRSYGVS…LDEEDAKEIE (236 aa)). Residues lysine 46, 53 to 55 (GRG), glutamate 99, cysteine 102, and glutamate 107 contribute to the ATP site. 2 residues coordinate Mg(2+): asparagine 199 and aspartate 213. Substrate is bound by residues asparagine 264 and 321-323 (GIM).

The protein belongs to the succinate/malate CoA ligase beta subunit family. As to quaternary structure, heterotetramer of two alpha and two beta subunits. It depends on Mg(2+) as a cofactor.

It catalyses the reaction succinate + ATP + CoA = succinyl-CoA + ADP + phosphate. The catalysed reaction is GTP + succinate + CoA = succinyl-CoA + GDP + phosphate. It functions in the pathway carbohydrate metabolism; tricarboxylic acid cycle; succinate from succinyl-CoA (ligase route): step 1/1. Functionally, succinyl-CoA synthetase functions in the citric acid cycle (TCA), coupling the hydrolysis of succinyl-CoA to the synthesis of either ATP or GTP and thus represents the only step of substrate-level phosphorylation in the TCA. The beta subunit provides nucleotide specificity of the enzyme and binds the substrate succinate, while the binding sites for coenzyme A and phosphate are found in the alpha subunit. In Bacillus anthracis (strain A0248), this protein is Succinate--CoA ligase [ADP-forming] subunit beta.